The primary structure comprises 548 residues: MKLCLLALGAAVAAAPTATLANGDTITGLNAIVNEKFLGIPFAEPPVGTLRFKPPVPYSASLNGQQFTSYGPSCMQMNPMGSFEDTLPKNARHLVLQSKIFQVVLPNDEDCLTINVIRPPGTRASAGLPVMLWIFGGGFELGGSSLFPGDQMVAKSVLMGKPVIHVSMNYRVASWGFLAGPDIQNEGSGNAGLHDQRLAMQWVADNIAGFGGDPSKVTIYGESAGSMSTFVHLVWNDGDNTYNGKPLFRAAIMQSGCMVPSDPVDGTYGTEIYNQVVASAGCGSASDKLACLRGLSQDTLYQATSDTPGVLAYPSLRLSYLPRPDGTFITDDMYALVRDGKYAHVPVIIGDQNDEGTLFGLSSLNVTTDAQARAYFKQSFIHASDAEIDTLMAAYTSDITQGSPFDTGIFNAITPQFKRISALLGDLAFTLARRYFLNYYQGGTKYSFLSKQLSGLPVLGTFHGNDIIWQDYLVGSGSVIYNNAFIAFANDLDPNKAGLWTNWPTYTSSSQSGNNLMQINGLGLYTGKDNFRPDAYSALFSNPPSFFV.

Positions 1–14 (MKLCLLALGAAVAA) are cleaved as a signal peptide. A disulfide bridge connects residues Cys74 and Cys111. Ser223 functions as the Acyl-ester intermediate in the catalytic mechanism. An intrachain disulfide couples Cys282 to Cys291. Glu355 serves as the catalytic Charge relay system. N-linked (GlcNAc...) asparagine glycosylation is present at Asn365. The Charge relay system role is filled by His463.

The protein belongs to the type-B carboxylesterase/lipase family.

It carries out the reaction a triacylglycerol + H2O = a diacylglycerol + a fatty acid + H(+). This Diutina rugosa (Yeast) protein is Lipase 2 (LIP2).